The sequence spans 367 residues: Probable cinnamyl alcohol dehydrogenase (367 aa).

Position 47 (C47) interacts with Zn(2+). NADP(+) is bound at residue T49. H69, E70, C100, C103, C106, C114, and C163 together coordinate Zn(2+). NADP(+) is bound by residues T167, 188-193 (GLGGVG), 211-216 (SSSSKK), T251, G275, and 298-300 (SFI).

Belongs to the zinc-containing alcohol dehydrogenase family. As to quaternary structure, homodimer. Zn(2+) is required as a cofactor.

The catalysed reaction is (E)-cinnamyl alcohol + NADP(+) = (E)-cinnamaldehyde + NADPH + H(+). It carries out the reaction (E)-coniferol + NADP(+) = (E)-coniferaldehyde + NADPH + H(+). The enzyme catalyses (E)-sinapyl alcohol + NADP(+) = (E)-sinapaldehyde + NADPH + H(+). It catalyses the reaction (E)-4-coumaroyl alcohol + NADP(+) = (E)-4-coumaraldehyde + NADPH + H(+). The catalysed reaction is (E)-caffeyl alcohol + NADP(+) = (E)-caffeyl aldehyde + NADPH + H(+). The protein operates within aromatic compound metabolism; phenylpropanoid biosynthesis. Its function is as follows. Involved in lignin biosynthesis. May catalyze the final step specific for the production of lignin monomers, like coniferyl alcohol, sinapyl alcohol and 4-coumaryl alcohol. The polypeptide is Probable cinnamyl alcohol dehydrogenase (Zea mays (Maize)).